Reading from the N-terminus, the 87-residue chain is U3-theraphotoxin-Cg1b (87 aa).

The N-terminal stretch at 1 to 23 (MRTLTLIAIVTCAALVIFHAAAA) is a signal peptide. Residues 24–48 (EELEAQDVIQPEDIFTGVATLEEDR) constitute a propeptide that is removed on maturation. Cystine bridges form between C52–C65, C56–C79, and C73–C84.

This sequence belongs to the neurotoxin 12 (Hwtx-2) family. 03 (juruin) subfamily. Expressed by the venom gland.

The protein localises to the secreted. Its function is as follows. Probable ion channel inhibitor. This is U3-theraphotoxin-Cg1b from Chilobrachys guangxiensis (Chinese earth tiger tarantula).